An 806-amino-acid polypeptide reads, in one-letter code: MRAAWGSVWCLCLAAAVGALPAARRRGAERSGGQAAEYLRSETAFLEELVFGSGDTIELSCNTQSSSVSVFWFKDGIGIAPSNRTHIGQKLLKIINVSYDDSGLYSCKPRHSNEVLGNFTVRVTDSPSSGDDEDDDDESEDTGVPFWTRPDKMEKKLLAVPAANTVRFRCPAGGNPTPTIYWLKNGKEFKGEHRIGGIKLRHQQWSLVMESVVPSDRGNYTCVVENKYGNIRHTYQLDVLERSPHRPILQAGLPANQTVVVGSNVEFHCKVYSDAQPHIQWLKHVEVNGSKYGPDGTPYVTVLKTAGVNTTDKELEILYLRNVTFEDAGEYTCLAGNSIGFSHHSAWLTVLPAEELMEMDDSGSVYAGILSYGTGLVLFILVLVIVIICRMKMPNKKAMNTTTVQKVSKFPLKRQQVSLESNSSMNSNTPLVRITRLSSSDGPMLANVSELELPPDPKWELARSRLTLGKPLGEGCFGQVVMAEAIGIDKDKPNKAITVAVKMLKDDATDKDLSDLVSEMEMMKMIGKHKNIINLLGACTQDGPLYVLVEYASKGNLREYLRARRPPGMDYSFDTCKLPEEQLTFKDLVSCAYQVARGMEYLASQKCIHRDLAARNVLVTEDNVMKIADFGLARDVHNIDYYKKTTNGRLPVKWMAPEALFDRVYTHQSDVWSFGVLLWEIFTLGGSPYPGIPVEELFKLLKEGHRMDKPANCTHDLYMIMRECWHAVPSQRPTFKQLVEDLDRVLTMTSTDEYLDLSVPFEQYSPAGQDTHSTCSSGDDSVFAHDLLPDEPCLPKHVPCNGVIRT.

Residues 1 to 19 form the signal peptide; it reads MRAAWGSVWCLCLAAAVGA. At 20 to 364 the chain is on the extracellular side; that stretch reads LPAARRRGAE…ELMEMDDSGS (345 aa). Positions 24–124 constitute an Ig-like C2-type 1 domain; that stretch reads RRRGAERSGG…VLGNFTVRVT (101 aa). The cysteines at positions 61 and 107 are disulfide-linked. N-linked (GlcNAc...) asparagine glycans are attached at residues Asn83, Asn96, and Asn118. Positions 121–146 are disordered; that stretch reads VRVTDSPSSGDDEDDDDESEDTGVPF. A compositionally biased stretch (acidic residues) spans 130–141; sequence GDDEDDDDESED. 2 Ig-like C2-type domains span residues 150–238 and 247–349; these read PDKM…YQLD and PILQ…AWLT. An intrachain disulfide couples Cys170 to Cys222. Residues Asn219, Asn256, Asn288, Asn309, and Asn322 are each glycosylated (N-linked (GlcNAc...) asparagine). Cys269 and Cys333 form a disulfide bridge. Residues 365-389 form a helical membrane-spanning segment; sequence VYAGILSYGTGLVLFILVLVIVIIC. At 390 to 806 the chain is on the cytoplasmic side; that stretch reads RMKMPNKKAM…HVPCNGVIRT (417 aa). The region spanning 466–755 is the Protein kinase domain; it reads LTLGKPLGEG…LTMTSTDEYL (290 aa). ATP is bound by residues 472 to 480 and Lys502; that span reads LGEGCFGQV. Catalysis depends on Asp611, which acts as the Proton acceptor. 4 positions are modified to phosphotyrosine; by autocatalysis: Tyr641, Tyr642, Tyr718, and Tyr754.

This sequence belongs to the protein kinase superfamily. Tyr protein kinase family. Fibroblast growth factor receptor subfamily. As to quaternary structure, monomer. Homodimer after ligand binding. Post-translationally, autophosphorylated. Binding of FGF family members together with heparan sulfate proteoglycan or heparin promotes receptor dimerization and autophosphorylation on tyrosine residues. Autophosphorylation occurs in trans between the two FGFR molecules present in the dimer.

Its subcellular location is the cell membrane. The enzyme catalyses L-tyrosyl-[protein] + ATP = O-phospho-L-tyrosyl-[protein] + ADP + H(+). With respect to regulation, present in an inactive conformation in the absence of bound ligand. Ligand binding leads to dimerization and activation by autophosphorylation on tyrosine residues. Functionally, tyrosine-protein kinase that acts as a cell-surface receptor for fibroblast growth factors and plays an essential role in the regulation of cell proliferation, differentiation and apoptosis. Plays an essential role in the regulation of chondrocyte differentiation, proliferation and apoptosis, and is required for normal skeleton development. Regulates both osteogenesis and postnatal bone mineralization by osteoblasts. Promotes apoptosis in chondrocytes, but can also promote cancer cell proliferation. Phosphorylates PLCG1, CBL and FRS2. Ligand binding leads to the activation of several signaling cascades. Activation of PLCG1 leads to the production of the cellular signaling molecules diacylglycerol and inositol 1,4,5-trisphosphate. Phosphorylation of FRS2 triggers recruitment of GRB2, GAB1, PIK3R1 and SOS1, and mediates activation of RAS, MAPK1/ERK2, MAPK3/ERK1 and the MAP kinase signaling pathway, as well as of the AKT1 signaling pathway. The polypeptide is Fibroblast growth factor receptor 3 (FGFR3) (Gallus gallus (Chicken)).